The chain runs to 231 residues: Very-long-chain (3R)-3-hydroxyacyl-CoA dehydratase 4 (231 aa).

Residues 1–19 (MGPVALPTWLQPRYRKNAY) are Cytoplasmic-facing. The helical transmembrane segment at 20-40 (LFIYYLIQFCGHSWIFTNMTV) threads the bilayer. The Lumenal segment spans residues 41-56 (RFFSFGKDSMVDTFYA). The helical transmembrane segment at 57–77 (IGLVMQLCQSISLLELLHIYV) threads the bilayer. Residues 78–112 (GIESNHLLPRILQLTERIIVLFMVITSQEEVQEKY) are Cytoplasmic-facing. A helical transmembrane segment spans residues 113 to 133 (VVCVLFIFRNLLDMVRYTYSM). At 134–135 (LS) the chain is on the lumenal side. Residues 136-156 (VIGISYAVLTWFSQTLWMPIY) traverse the membrane as a helical segment. Tyr156 is an active-site residue. Residue Pro157 is a topological domain, cytoplasmic. The chain crosses the membrane as a helical span at residues 158-178 (LCVLAEAFTIYQSLPYFESFG). The active site involves Glu163. Topologically, residues 179-189 (TYSTKLPFDLS) are lumenal. Residues 190–210 (FYFPYVLKIYLMMLFVGMYFT) traverse the membrane as a helical segment. Residues 211–231 (YNHLYSERRDILRVFPNKKKM) are Cytoplasmic-facing.

The protein belongs to the very long-chain fatty acids dehydratase HACD family. May interact with enzymes of the ELO family (including ELOVL1); with those enzymes that mediate condensation, the first of the four steps of the reaction cycle responsible for fatty acids elongation, may be part of a larger fatty acids elongase complex.

It localises to the endoplasmic reticulum membrane. The enzyme catalyses a very-long-chain (3R)-3-hydroxyacyl-CoA = a very-long-chain (2E)-enoyl-CoA + H2O. It carries out the reaction (3R)-hydroxyhexadecanoyl-CoA = (2E)-hexadecenoyl-CoA + H2O. The protein operates within lipid metabolism; fatty acid biosynthesis. In terms of biological role, catalyzes the third of the four reactions of the long-chain fatty acids elongation cycle. This endoplasmic reticulum-bound enzymatic process, allows the addition of two carbons to the chain of long- and very long-chain fatty acids/VLCFAs per cycle. This enzyme catalyzes the dehydration of the 3-hydroxyacyl-CoA intermediate into trans-2,3-enoyl-CoA, within each cycle of fatty acid elongation. Thereby, it participates in the production of VLCFAs of different chain lengths that are involved in multiple biological processes as precursors of membrane lipids and lipid mediators. This chain is Very-long-chain (3R)-3-hydroxyacyl-CoA dehydratase 4, found in Bos taurus (Bovine).